Consider the following 208-residue polypeptide: Cysteine-rich protein 2 (208 aa).

In terms of domain architecture, LIM zinc-binding 1 spans 5–57; sequence CPKCDKTVYFAEKVSSLGKDWHRFCLRCEHCSKTLTPGGHAEHDGKPFCHKPC. An N6-acetyllysine modification is found at Lys-23. Residues 98-117 are disordered; sequence TEERKASGPPKGPSKASSVT. Ser-104 is subject to Phosphoserine. Residues 104–115 are compositionally biased toward low complexity; it reads SGPPKGPSKASS. Residues 126–178 enclose the LIM zinc-binding 2 domain; it reads CPRCNKRVYFAEKVTSLGKDWHRPCLRCERCGKTLTPGGHAEHDGQPYCHKPC. An N6-acetyllysine mark is found at Lys-138 and Lys-144.

As to quaternary structure, interacts with TGFB1I1.

The sequence is that of Cysteine-rich protein 2 (CRIP2) from Bos taurus (Bovine).